Here is a 136-residue protein sequence, read N- to C-terminus: Histone H3.2 (136 aa).

The segment at methionine 1–arginine 43 is disordered. N6,N6,N6-trimethyllysine; alternate occurs at positions 5 and 10. N6,N6-dimethyllysine; alternate occurs at positions 5 and 10. 2 positions are modified to N6-methyllysine; alternate: lysine 5 and lysine 10. Lysine 10 carries the N6-acetyllysine; alternate modification. Serine 11 bears the Phosphoserine mark. Phosphothreonine is present on threonine 12. Lysine 15 is modified (N6-acetyllysine). An N6-methyllysine; alternate mark is found at lysine 19, lysine 24, and lysine 28. Lysine 19 and lysine 24 each carry N6-acetyllysine; alternate. Lysine 28 carries the N6,N6,N6-trimethyllysine; alternate modification. An N6,N6-dimethyllysine; alternate modification is found at lysine 28. Residue serine 29 is modified to Phosphoserine. Lysine 37 is modified (N6,N6,N6-trimethyllysine; alternate). Lysine 37 is modified (N6,N6-dimethyllysine; alternate). The residue at position 37 (lysine 37) is an N6-methyllysine; alternate.

The protein belongs to the histone H3 family. As to quaternary structure, the nucleosome is a histone octamer containing two molecules each of H2A, H2B, H3 and H4 assembled in one H3-H4 heterotetramer and two H2A-H2B heterodimers. The octamer wraps approximately 147 bp of DNA. In terms of processing, acetylation is generally linked to gene activation. Can be acetylated to form H3K9ac, H3K14ac, H3K18ac and H3K23ac. H3K9ac could compete with H3K9me and prevent gene silencing. H3K9ac is restricted to euchromatin. Methylated to form mainly H3K4me, H3K9me, H3K18me, H3K23me, H3K27me and H3K36me. H3K4me1/2/3, H3K9me3, H3K27me3 and H3K36me1/2/3 are typical marks for euchromatin, whereas heterochromatic chromocenters are enriched in H3K9me1/2 and H3K27me1/2. H2BK143ub1 is probably prerequisite for H3K4me. Post-translationally, can be phosphorylated to form H3S10ph, H3T11ph and H3S28ph.

It is found in the nucleus. It localises to the chromosome. Functionally, core component of nucleosome. Nucleosomes wrap and compact DNA into chromatin, limiting DNA accessibility to the cellular machineries which require DNA as a template. Histones thereby play a central role in transcription regulation, DNA repair, DNA replication and chromosomal stability. DNA accessibility is regulated via a complex set of post-translational modifications of histones, also called histone code, and nucleosome remodeling. The chain is Histone H3.2 from Brassica napus (Rape).